The primary structure comprises 232 residues: GTP cyclohydrolase III (232 aa).

This sequence belongs to the archaeal-type GTP cyclohydrolase family.

It catalyses the reaction GTP + 3 H2O = 2-amino-5-formylamino-6-(5-phospho-D-ribosylamino)pyrimidin-4(3H)-one + 2 phosphate + 2 H(+). In terms of biological role, catalyzes the formation of 2-amino-5-formylamino-6-ribofuranosylamino-4(3H)-pyrimidinone ribonucleotide monophosphate and inorganic phosphate from GTP. Also has an independent pyrophosphate phosphohydrolase activity. The chain is GTP cyclohydrolase III from Saccharolobus islandicus (strain Y.N.15.51 / Yellowstone #2) (Sulfolobus islandicus).